We begin with the raw amino-acid sequence, 1093 residues long: Protein AF-17 (1093 aa).

The PHD-type 1 zinc finger occupies 5–57 (VGGCCVCSDERGWAENPLVYCDGHACSVAVHQACYGIVQVPTGPWFCRKCESQ). A C2HC pre-PHD-type zinc finger spans residues 62-95 (RVRCELCPHKDGALKRTDNGGWAHVVCALYIPEV). A PHD-type 2 zinc finger spans residues 118–181 (KTCYICEEQG…KYCGYCKYHF (64 aa)). The disordered stretch occupies residues 185 to 500 (KTSRHSSGGG…GGPAAPSLPS (316 aa)). The segment covering 191 to 212 (SGGGGGGAGGGGGSMGGGGSGF) has biased composition (gly residues). The segment covering 231 to 255 (PTHHERGQKKSRKDKERLKQKHKKR) has biased composition (basic residues). Phosphoserine is present on S258. The span at 258 to 268 (SPPSILTPPVV) shows a compositional bias: pro residues. Residues 282–300 (SHHEASTQETSESSRESKG) show a composition bias toward basic and acidic residues. Positions 301-316 (KKSSSHSLSHKGKKLS) are enriched in basic residues. Positions 317-340 (SGKGVSSFTSASSSSSSSSSSSGG) are enriched in low complexity. Residues 345 to 354 (AVSSLQSSPD) show a composition bias toward polar residues. Residues 374–388 (APAPSAPPSPSAPEP) show a composition bias toward pro residues. Phosphoserine occurs at positions 378 and 423. A compositionally biased stretch (low complexity) spans 410–425 (STTTSSSGRARAPSPG). The residue at position 451 (T451) is a Phosphothreonine. Over residues 465–484 (EKKHKASKRSRHGPGRPKGS) the composition is skewed to basic residues. The tract at residues 729 to 764 (LQKENQRLQEQILSLTAKKERLQILNVQLSVPFPAL) is leucine-zipper. Disordered stretches follow at residues 775–871 (VPGP…RAPG) and 1060–1093 (QTNP…QEKG). Residues 787-796 (SSDSLSTSKS) are compositionally biased toward low complexity. Polar residues predominate over residues 804–813 (GLDNSLSTSS). 2 stretches are compositionally biased toward low complexity: residues 818–832 (SGCP…SFHS) and 839–853 (LLQQ…ALPG).

As to quaternary structure, interacts with histone H3; interaction is necessary for MLLT6 binding to nucleosomes; interaction is inhibited by histone H3 'Lys-27' methylations (H3K27me1, H3K27me2 and H3K27me3).

The protein localises to the nucleus. This Homo sapiens (Human) protein is Protein AF-17 (MLLT6).